Here is a 201-residue protein sequence, read N- to C-terminus: Small ribosomal subunit protein uS4 (201 aa).

Residues 91–151 (ARLDNVIYRA…DRSRSMLWFD (61 aa)) enclose the S4 RNA-binding domain.

Belongs to the universal ribosomal protein uS4 family. Part of the 30S ribosomal subunit. Contacts protein S5. The interaction surface between S4 and S5 is involved in control of translational fidelity.

Its function is as follows. One of the primary rRNA binding proteins, it binds directly to 16S rRNA where it nucleates assembly of the body of the 30S subunit. Functionally, with S5 and S12 plays an important role in translational accuracy. This is Small ribosomal subunit protein uS4 from Corynebacterium urealyticum (strain ATCC 43042 / DSM 7109).